We begin with the raw amino-acid sequence, 249 residues long: Ribonuclease 3 (249 aa).

Residues 21-149 (VDHQPLIDAL…LLGAIYLAHG (129 aa)) form the RNase III domain. Glu62 contacts Mg(2+). Residue Asp66 is part of the active site. Mg(2+) contacts are provided by Asp135 and Glu138. Glu138 is a catalytic residue. A DRBM domain is found at 176–244 (DWKTTLQERL…AHKAVGFLQD (69 aa)).

The protein belongs to the ribonuclease III family. As to quaternary structure, homodimer. It depends on Mg(2+) as a cofactor.

It is found in the cytoplasm. The enzyme catalyses Endonucleolytic cleavage to 5'-phosphomonoester.. In terms of biological role, digests double-stranded RNA. Involved in the processing of primary rRNA transcript to yield the immediate precursors to the large and small rRNAs (23S and 16S). Processes some mRNAs, and tRNAs when they are encoded in the rRNA operon. Processes pre-crRNA and tracrRNA of type II CRISPR loci if present in the organism. The polypeptide is Ribonuclease 3 (Corynebacterium diphtheriae (strain ATCC 700971 / NCTC 13129 / Biotype gravis)).